The sequence spans 329 residues: Microtubule-associated protein RP/EB family member 1C (329 aa).

Residues 13–115 (FVGRSEILAW…FMQWMKKYCD (103 aa)) form the Calponin-homology (CH) domain. Residues 130-141 (REASKGGKEATK) show a composition bias toward basic and acidic residues. Residues 130–203 (REASKGGKEA…SAKQSKPVPA (74 aa)) form a disordered region. The segment covering 174–185 (SNNTGTHHSSTG) has biased composition (low complexity). An EB1 C-terminal domain is found at 193–263 (PSAKQSKPVP…LYAADGEDVG (71 aa)). The required for nuclear localization stretch occupies residues 289-311 (KRKLIVNLDVDVAAITTLSPRQR).

It belongs to the MAPRE family. In terms of assembly, homodimer. Highly expressed in the root and shoot meristems, in guard cells of leaf stomata, pollen grains and pollen tubes.

The protein resides in the nucleus. It localises to the cytoplasm. Its subcellular location is the cytoskeleton. It is found in the spindle. The protein localises to the phragmoplast. In terms of biological role, plant-specific EB1 subtype that functions preferentially at early stages of plant mitosis by regulating spindle positioning and chromosome segregation. Accumulates in the prophase nucleus and is required to maintain spindle bipolarity during premetaphase and/or metaphase and for efficient segregation of chromosomes at anaphase. May play a role in the dynamics of microtubule network in elongating pollen tubes. The protein is Microtubule-associated protein RP/EB family member 1C (EB1C) of Arabidopsis thaliana (Mouse-ear cress).